Consider the following 338-residue polypeptide: MSKLFSEYKLKDVTLKNRIVMSPMCMYSVENKDGIATDFHFAHYVSRAAGGTGLVILEATAVQEVGRISEFDLGLWNDEQVPALKKLVDGLHYHGAKAGIQLAHAGRKAVLPGEIVAPSAIAFDEKSDKPVELTKEAIKEVVADFKRAAYRAKEAGFDVIEIHAAHGYLIHQFLSPITNRREDNYGGPAGNRYKILSDIIKAVKEVWDGPIIVRVSATDYAHGGLQLEDHIPFAKWMKADGVELIDVSTGGLVNVAPPVFPGYQVPFADEIRRGAGIATGALGLITRGEQAEEILCNERADLIIVGRELLRNPYFAKDAAKQLGETIEGPKQYSRAWK.

22-25 (SPMC) serves as a coordination point for FMN. Tyr-27 is a binding site for substrate. Residues Ala-59 and Gln-101 each contribute to the FMN site. 163 to 166 (HAAH) is a binding site for substrate. FMN contacts are provided by residues Arg-214 and 306–307 (GR).

The protein belongs to the NADH:flavin oxidoreductase/NADH oxidase family. NamA subfamily. As to quaternary structure, homotetramer. FMN serves as cofactor.

It catalyses the reaction A + NADPH + H(+) = AH2 + NADP(+). Its function is as follows. Catalyzes the reduction of the double bond of an array of alpha,beta-unsaturated aldehydes and ketones. It also reduces the nitro group of nitroester and nitroaromatic compounds. It could have a role in detoxification processes. The protein is NADPH dehydrogenase of Listeria monocytogenes serotype 4b (strain CLIP80459).